The primary structure comprises 74 residues: Anaphase-promoting complex subunit 13 (74 aa).

This sequence belongs to the APC13 family. In terms of assembly, the APC/C is composed of at least 12 subunits.

Its subcellular location is the nucleus. The protein operates within protein modification; protein ubiquitination. In terms of biological role, component of the anaphase promoting complex/cyclosome (APC/C), a cell cycle-regulated E3 ubiquitin ligase that controls progression through mitosis and the G1 phase of the cell cycle. The APC/C complex acts by mediating ubiquitination and subsequent degradation of target proteins: it mainly mediates the formation of 'Lys-11'-linked polyubiquitin chains and, to a lower extent, the formation of 'Lys-48'- and 'Lys-63'-linked polyubiquitin chains. The APC/C complex catalyzes assembly of branched 'Lys-11'-/'Lys-48'-linked branched ubiquitin chains on target proteins. This is Anaphase-promoting complex subunit 13 (anapc13) from Xenopus tropicalis (Western clawed frog).